A 388-amino-acid chain; its full sequence is MADPYGWIRADLESLHRVGWYRTTRTHNGLAGPQMDVDGKPVLQFASNDYLGLSGDERLIEAACRAVRLYGAGATGSRLLSGERDVHRELEQALAGWKGCDDCLVFSSGYLANLGTIPALVGKRDLVVGDEYNHACLRGGAELSGAVHRLYPHGDCSALESLLIEQRERHRRCLICTDSVFSMDGDLIDLARIADLARRYGCMLLVDEAHATGVLGPTGAGAVEQLGLTRSLVQMGTLSKALGSQGGYVCGSAELVDYLRNRARSFVYTTGLAPAAAAAALEAVHIARTETPRRALLRQNIARLRAGIDEIGIAQLPSDAAILCLWVGDIEATHCFAGELFEEGIFAPAVRPPTVPTSRIRLSLMATHTEAMIDSLIAALTQVSSRFS.

R22 provides a ligand contact to substrate. 109-110 (GY) provides a ligand contact to pyridoxal 5'-phosphate. H134 contacts substrate. Pyridoxal 5'-phosphate-binding positions include S182, 207-210 (DEAH), and 237-240 (TLSK). K240 is modified (N6-(pyridoxal phosphate)lysine). T354 is a binding site for substrate.

This sequence belongs to the class-II pyridoxal-phosphate-dependent aminotransferase family. BioF subfamily. As to quaternary structure, homodimer. Pyridoxal 5'-phosphate serves as cofactor.

The catalysed reaction is 6-carboxyhexanoyl-[ACP] + L-alanine + H(+) = (8S)-8-amino-7-oxononanoate + holo-[ACP] + CO2. Its pathway is cofactor biosynthesis; biotin biosynthesis. Functionally, catalyzes the decarboxylative condensation of pimeloyl-[acyl-carrier protein] and L-alanine to produce 8-amino-7-oxononanoate (AON), [acyl-carrier protein], and carbon dioxide. This Gloeobacter violaceus (strain ATCC 29082 / PCC 7421) protein is Putative 8-amino-7-oxononanoate synthase (bioF).